The sequence spans 105 residues: Probable tetrachloroethene reductive dehalogenase membrane anchor protein (105 aa).

3 helical membrane passes run 3 to 23, 35 to 55, and 66 to 86; these read IYDVLIWMALGMTALLIQYGI, IPLQICGFLANFFFIFALAWG, and AIGMGFIFFGGTALIPAIITY.

This sequence belongs to the PceB family.

It localises to the cell membrane. May act as a membrane anchor for the tetrachloroethene reductive dehalogenase PceA. The protein is Probable tetrachloroethene reductive dehalogenase membrane anchor protein of Dehalobacter restrictus (strain DSM 9455 / PER-K23).